The sequence spans 338 residues: Lipoate-protein ligase A (338 aa).

In terms of domain architecture, BPL/LPL catalytic spans 29 to 216 (PATQRVLFLW…AFFAHYGERV (188 aa)). ATP-binding positions include Arg71, 76–79 (GAVF), and Lys134. Position 134 (Lys134) interacts with (R)-lipoate.

This sequence belongs to the LplA family. In terms of assembly, monomer.

Its subcellular location is the cytoplasm. It catalyses the reaction L-lysyl-[lipoyl-carrier protein] + (R)-lipoate + ATP = N(6)-[(R)-lipoyl]-L-lysyl-[lipoyl-carrier protein] + AMP + diphosphate + H(+). Its pathway is protein modification; protein lipoylation via exogenous pathway; protein N(6)-(lipoyl)lysine from lipoate: step 1/2. The protein operates within protein modification; protein lipoylation via exogenous pathway; protein N(6)-(lipoyl)lysine from lipoate: step 2/2. Catalyzes both the ATP-dependent activation of exogenously supplied lipoate to lipoyl-AMP and the transfer of the activated lipoyl onto the lipoyl domains of lipoate-dependent enzymes. This chain is Lipoate-protein ligase A, found in Salmonella paratyphi C (strain RKS4594).